The sequence spans 676 residues: MTRDDKFPIVYSLLLIVLLFVSPIYGDGDADALLKFKSSLVNASSLGGWDSGEPPCSGDKGSDSKWKGVMCSNGSVFALRLENMSLSGELDVQALGSIRGLKSISFMRNHFEGKIPRGIDGLVSLAHLYLAHNQFTGEIDGDLFSGMKALLKVHLEGNRFSGEIPESLGKLPKLTELNLEDNMFTGKIPAFKQKNLVTVNVANNQLEGRIPLTLGLMNITFFSGNKGLCGAPLLPCRYTRPPFFTVFLLALTILAVVVLITVFLSVCILSRRQGKGQDQIQNHGVGHFHGQVYGQPEQQQHSEKSSQDSKVYRKLANETVQRDSTATSGAISVGGLSPDEDKRGDQRKLHFVRNDQERFTLQDMLRASAEVLGSGGFGSSYKAALSSGRAVVVKRFRFMSNIGREEFYDHMKKIGRLSHPNLLPLIAFYYRKEEKLLVTNYISNGSLANLLHANRTPGQVVLDWPIRLKIVRGVTRGLAYLYRVFPDLNLPHGHLKSSNVLLDPNFEPLLTDYALVPVVNRDQSQQFMVAYKAPEFTQQDRTSRRSDVWSLGILILEILTGKFPANYLRQGKGADDELAAWVESVARTEWTADVFDKEMKAGKEHEAQMLKLLKIGLRCCDWDIEKRIELHEAVDRIEEVDRDAGGGQESVRSSYVTASDGDHRSSRAMTEEFSLM.

The signal sequence occupies residues 1–26 (MTRDDKFPIVYSLLLIVLLFVSPIYG). At 27–242 (DGDADALLKF…LLPCRYTRPP (216 aa)) the chain is on the extracellular side. N-linked (GlcNAc...) asparagine glycosylation is found at Asn42, Asn73, and Asn83. 5 LRR repeats span residues 98 to 122 (IRGLKSISFMRNHFEGKIPRGIDGL), 123 to 146 (VSLAHLYLAHNQFTGEIDGDLFSG), 148 to 171 (KALLKVHLEGNRFSGEIPESLGKL), 172 to 195 (PKLTELNLEDNMFTGKIPAFKQKN), and 197 to 218 (VTVNVANNQLEGRIPLTLGLMN). A glycan (N-linked (GlcNAc...) asparagine) is linked at Asn218. Residues 243 to 263 (FFTVFLLALTILAVVVLITVF) form a helical membrane-spanning segment. Residues 264–676 (LSVCILSRRQ…RAMTEEFSLM (413 aa)) lie on the Cytoplasmic side of the membrane. A compositionally biased stretch (polar residues) spans 319-330 (TVQRDSTATSGA). Positions 319-347 (TVQRDSTATSGAISVGGLSPDEDKRGDQR) are disordered. Residues 366–640 (RASAEVLGSG…HEAVDRIEEV (275 aa)) form the Protein kinase domain. Position 368 is a phosphoserine (Ser368). Residues 372 to 380 (LGSGGFGSS) and Lys394 contribute to the ATP site. 2 positions are modified to phosphoserine: Ser446 and Ser543. The interval 641–676 (DRDAGGGQESVRSSYVTASDGDHRSSRAMTEEFSLM) is disordered.

It belongs to the protein kinase superfamily. Ser/Thr protein kinase family.

Its subcellular location is the membrane. The catalysed reaction is L-seryl-[protein] + ATP = O-phospho-L-seryl-[protein] + ADP + H(+). It carries out the reaction L-threonyl-[protein] + ATP = O-phospho-L-threonyl-[protein] + ADP + H(+). This is Probable LRR receptor-like serine/threonine-protein kinase At4g31250 from Arabidopsis thaliana (Mouse-ear cress).